Here is a 996-residue protein sequence, read N- to C-terminus: P3N-PIPO polyprotein (996 aa).

Residues 173–313 (VVRSASVNNL…VFFYDDVDHY (141 aa)) form the Peptidase S30 domain. Residues histidine 226, glutamate 235, and serine 267 each act as for P1 proteinase activity in the active site. Positions 365–368 (KLSC) match the Involved in interaction with stylet and aphid transmission motif. An Involved in virions binding and aphid transmission motif is present at residues 621–623 (PTK). The 123-residue stretch at 647 to 769 (MYIAKEGYCY…QSEMKHYRVG (123 aa)) folds into the Peptidase C6 domain. Residues cysteine 655 and histidine 728 each act as for helper component proteinase activity in the active site.

It belongs to the potyviridae P3N-PIPO polyprotein family. As to quaternary structure, interacts (via PIPO domain) with host PCaP1 protein; this interaction may help to anchor the movement complex to the plasma membrane from which the complex could move to the plasmodesmata. In terms of processing, potyviral RNA is expressed as two polyproteins which undergo post-translational proteolytic processing. Genome polyprotein is processed by NIa-pro, P1 and HC-pro proteinases resulting in the production of at least ten individual proteins. P3N-PIPO is cleaved by P1 and HC-pro proteinases resulting in the production of three individual proteins. The P1 proteinase and the HC-pro cleave only their respective C-termini autocatalytically.

Its subcellular location is the host cell junction. It localises to the host plasmodesma. The catalysed reaction is Hydrolyzes a Gly-|-Gly bond at its own C-terminus, commonly in the sequence -Tyr-Xaa-Val-Gly-|-Gly, in the processing of the potyviral polyprotein.. In terms of biological role, required for aphid transmission and also has proteolytic activity. Only cleaves a Gly-Gly dipeptide at its own C-terminus. Interacts with virions and aphid stylets. Acts as a suppressor of RNA-mediated gene silencing, also known as post-transcriptional gene silencing (PTGS), a mechanism of plant viral defense that limits the accumulation of viral RNAs. May have RNA-binding activity. Allows efficient cell to cell propagation, by bypassing the host cell wall barrier. Transports viral genome to neighboring plant cells directly through plasmosdesmata, without any budding. In Zucchini yellow mosaic virus (strain Reunion Island) (ZYMV), this protein is P3N-PIPO polyprotein.